Consider the following 363-residue polypeptide: Fructose-1,6-bisphosphatase 1 (363 aa).

Val-2 is modified (N-acetylvaline). AMP contacts are provided by residues 18 to 22 (VLEEG) and 28 to 32 (TGEMT). 2 residues coordinate Mg(2+): Asp-69 and Glu-98. Residue 113–114 (KY) participates in AMP binding. Residues Asp-119, Leu-121, and Asp-122 each contribute to the Mg(2+) site. Residue 122-125 (DGSS) participates in substrate binding. Arg-141 serves as a coordination point for AMP. Lys-151 carries the N6-succinyllysine modification. Residues 213–216 (NEGY), 244–249 (RYVGSM), Tyr-265, and 275–277 (KLR) each bind substrate. Phosphotyrosine is present on residues Tyr-216, Tyr-245, and Tyr-265. A Mg(2+)-binding site is contributed by Glu-281. Ser-339 and Ser-353 each carry phosphoserine.

It belongs to the FBPase class 1 family. Homotetramer. The cofactor is Mg(2+).

The catalysed reaction is beta-D-fructose 1,6-bisphosphate + H2O = beta-D-fructose 6-phosphate + phosphate. The protein operates within carbohydrate biosynthesis; gluconeogenesis. Subject to complex allosteric regulation. The enzyme can assume an active R-state, or an inactive T-state. Intermediate conformations may exist. AMP acts as an allosteric inhibitor. AMP binding affects the turnover of bound substrate and not the affinity for substrate. Fructose 2,6-bisphosphate acts as a competitive inhibitor. Fructose 2,6-bisphosphate and AMP have synergistic effects. Functionally, catalyzes the hydrolysis of fructose 1,6-bisphosphate to fructose 6-phosphate in the presence of divalent cations, acting as a rate-limiting enzyme in gluconeogenesis. Plays a role in regulating glucose sensing and insulin secretion of pancreatic beta-cells. Appears to modulate glycerol gluconeogenesis in liver. Important regulator of appetite and adiposity; increased expression of the protein in liver after nutrient excess increases circulating satiety hormones and reduces appetite-stimulating neuropeptides and thus seems to provide a feedback mechanism to limit weight gain. This chain is Fructose-1,6-bisphosphatase 1 (Fbp1), found in Rattus norvegicus (Rat).